The following is a 164-amino-acid chain: Putative 4-hydroxy-4-methyl-2-oxoglutarate aldolase (164 aa).

Residues G79–L82 and R101 each bind substrate. D102 serves as a coordination point for a divalent metal cation.

The protein belongs to the class II aldolase/RraA-like family. As to quaternary structure, homotrimer. A divalent metal cation serves as cofactor.

The enzyme catalyses 4-hydroxy-4-methyl-2-oxoglutarate = 2 pyruvate. It carries out the reaction oxaloacetate + H(+) = pyruvate + CO2. In terms of biological role, catalyzes the aldol cleavage of 4-hydroxy-4-methyl-2-oxoglutarate (HMG) into 2 molecules of pyruvate. Also contains a secondary oxaloacetate (OAA) decarboxylase activity due to the common pyruvate enolate transition state formed following C-C bond cleavage in the retro-aldol and decarboxylation reactions. The chain is Putative 4-hydroxy-4-methyl-2-oxoglutarate aldolase from Halorhodospira halophila (strain DSM 244 / SL1) (Ectothiorhodospira halophila (strain DSM 244 / SL1)).